Reading from the N-terminus, the 408-residue chain is Centromere protein U (408 aa).

The segment covering 1–33 (DRPRPARLSHARFSKNHSGRTHSMKDKAGRKHR) has biased composition (basic residues). The tract at residues 1 to 218 (DRPRPARLSH…GKRKKPRSYT (218 aa)) is disordered. Phosphothreonine; by PLK1 is present on Thr-72. The residue at position 92 (Thr-92) is a Phosphothreonine. The span at 94-103 (QEKEAKRSSD) shows a compositional bias: basic and acidic residues. Position 102 is a phosphoserine (Ser-102). Position 104 is a phosphothreonine (Thr-104). Phosphoserine occurs at positions 105, 110, and 114. The segment covering 118 to 127 (SAKKPRRKLK) has biased composition (basic residues). Phosphoserine occurs at positions 130, 133, and 135. The span at 176–186 (PQKTGPQSAES) shows a compositional bias: polar residues. Residue Lys-178 forms a Glycyl lysine isopeptide (Lys-Gly) (interchain with G-Cter in SUMO2) linkage. 2 positions are modified to phosphoserine: Ser-183 and Ser-187. Phosphothreonine is present on Thr-192. At Ser-222 the chain carries Phosphoserine. Positions 273-350 (SNLKEELIKM…LRKAAYFLSN (78 aa)) form a coiled coil. Positions 293–310 (KRKNAKIISNIEKKRQRL) match the Nuclear localization signal motif.

This sequence belongs to the CENP-U/AME1 family. As to quaternary structure, component of the CENPA-NAC complex, at least composed of CENPA, CENPC, CENPH, CENPM, CENPN, CENPT and CENPU. The CENPA-NAC complex interacts with the CENPA-CAD complex, composed of CENPI, CENPK, CENPL, CENPO, CENPP, CENPQ, CENPR and CENPS. Interacts with MLF1. In terms of processing, phosphorylated by PLK1 at Thr-72, creating a self-tethering site that specifically interacts with the polo-box domain of PLK1.

It is found in the cytoplasm. Its subcellular location is the nucleus. It localises to the chromosome. The protein resides in the centromere. The protein localises to the kinetochore. Functionally, component of the CENPA-NAC (nucleosome-associated) complex, a complex that plays a central role in assembly of kinetochore proteins, mitotic progression and chromosome segregation. The CENPA-NAC complex recruits the CENPA-CAD (nucleosome distal) complex and may be involved in incorporation of newly synthesized CENPA into centromeres. Plays an important role in the correct PLK1 localization to the mitotic kinetochores. A scaffold protein responsible for the initial recruitment and maintenance of the kinetochore PLK1 population until its degradation. Involved in transcriptional repression. The chain is Centromere protein U (CENPU) from Bos taurus (Bovine).